The chain runs to 336 residues: Lipoyl synthase (336 aa).

Residues C81, C86, C92, C107, C111, C114, and S323 each coordinate [4Fe-4S] cluster. The region spanning 93–312 is the Radical SAM core domain; the sequence is FGHGTATFMI…EDYGYELGFS (220 aa).

Belongs to the radical SAM superfamily. Lipoyl synthase family. The cofactor is [4Fe-4S] cluster.

Its subcellular location is the cytoplasm. The catalysed reaction is [[Fe-S] cluster scaffold protein carrying a second [4Fe-4S](2+) cluster] + N(6)-octanoyl-L-lysyl-[protein] + 2 oxidized [2Fe-2S]-[ferredoxin] + 2 S-adenosyl-L-methionine + 4 H(+) = [[Fe-S] cluster scaffold protein] + N(6)-[(R)-dihydrolipoyl]-L-lysyl-[protein] + 4 Fe(3+) + 2 hydrogen sulfide + 2 5'-deoxyadenosine + 2 L-methionine + 2 reduced [2Fe-2S]-[ferredoxin]. The protein operates within protein modification; protein lipoylation via endogenous pathway; protein N(6)-(lipoyl)lysine from octanoyl-[acyl-carrier-protein]: step 2/2. Its function is as follows. Catalyzes the radical-mediated insertion of two sulfur atoms into the C-6 and C-8 positions of the octanoyl moiety bound to the lipoyl domains of lipoate-dependent enzymes, thereby converting the octanoylated domains into lipoylated derivatives. This is Lipoyl synthase from Stenotrophomonas maltophilia (strain K279a).